Reading from the N-terminus, the 1113-residue chain is uncharacterized protein (1113 aa).

Residue 313–320 participates in ATP binding; sequence GPPGTGKS.

Belongs to the DNA2/NAM7 helicase family.

This is an uncharacterized protein from Mycoplasma pneumoniae (strain ATCC 29342 / M129 / Subtype 1) (Mycoplasmoides pneumoniae).